Reading from the N-terminus, the 116-residue chain is Large ribosomal subunit protein uL18 (116 aa).

It belongs to the universal ribosomal protein uL18 family. In terms of assembly, part of the 50S ribosomal subunit; part of the 5S rRNA/L5/L18/L25 subcomplex. Contacts the 5S and 23S rRNAs.

This is one of the proteins that bind and probably mediate the attachment of the 5S RNA into the large ribosomal subunit, where it forms part of the central protuberance. The polypeptide is Large ribosomal subunit protein uL18 (Mycoplasma mycoides subsp. mycoides SC (strain CCUG 32753 / NCTC 10114 / PG1)).